A 492-amino-acid chain; its full sequence is PTS system N-acetylmuramic acid-specific EIIBC component (492 aa).

One can recognise a PTS EIIB type-1 domain in the interval 1 to 89; sequence MAKINQSVIA…NELLNSSTPT (89 aa). The Phosphocysteine intermediate; for EIIB activity role is filled by C28. Residues 123-487 form the PTS EIIC type-1 domain; sequence TKFATIFTPL…KKIEVLKADV (365 aa). Helical transmembrane passes span 125-145, 167-187, 193-213, 227-247, 265-285, 311-331, 344-364, 378-398, 403-423, and 450-470; these read FATIFTPLIPGFIAVGLLLGF, IIGYMKVFSKGMFSFLSILIG, AFGGSGINGAIIASLFVLSYN, FFGYSIDPRGNIIGVLIAAIL, MILTSAITLLIMGAIAFIFIM, ILAGLFLLAVMFGVHQGFVPV, LFPILAMAGGGQVGAALALYV, GAIIPGLLGIGEPLIYGVTLP, FITACLGGAAGGFFIGLIAYL, and IFVGMAVYAAGLVVAYISGFV.

Its subcellular location is the cell inner membrane. The catalysed reaction is N-acetyl-beta-D-muramate(out) + N(pros)-phospho-L-histidyl-[protein] = N-acetyl-beta-D-muramate 6-phosphate(in) + L-histidyl-[protein]. Its function is as follows. The phosphoenolpyruvate-dependent sugar phosphotransferase system (sugar PTS), a major carbohydrate active transport system, catalyzes the phosphorylation of incoming sugar substrates concomitantly with their translocation across the cell membrane. This system is involved in N-acetylmuramic acid (MurNAc) transport, yielding cytoplasmic MurNAc-6-P. Is also able to take up anhydro-N-acetylmuramic acid (anhMurNAc), but cannot phosphorylate the carbon 6, probably because of the 1,6-anhydro ring. The sequence is that of PTS system N-acetylmuramic acid-specific EIIBC component (murP) from Photorhabdus laumondii subsp. laumondii (strain DSM 15139 / CIP 105565 / TT01) (Photorhabdus luminescens subsp. laumondii).